Here is a 73-residue protein sequence, read N- to C-terminus: Myosin-IB light chain (73 aa).

2 consecutive EF-hand domains span residues 3 to 38 (DEKTQLIEAFYNFDGDYDGFVSVEEFRGIIRDGLPM) and 38 to 73 (MTEAEITEFFEAADPNNTGFIDYKAFAAMLYSVDES). Ca(2+)-binding residues include Asp-16, Asp-18, Asp-20, and Glu-27.

Myosin I is a dimer of a heavy and a light chain. Inability to self-assemble into filaments. Interacts with myoB. Does not interact with myoC or myoD.

Its function is as follows. Functions as the light chain for myosin-B. Binds calcium with submicromolar affinity and may sense physiological calcium changes. The polypeptide is Myosin-IB light chain (mlcB) (Dictyostelium discoideum (Social amoeba)).